The sequence spans 291 residues: Glycine--tRNA ligase alpha subunit (291 aa).

It belongs to the class-II aminoacyl-tRNA synthetase family. As to quaternary structure, tetramer of two alpha and two beta subunits.

The protein resides in the cytoplasm. The catalysed reaction is tRNA(Gly) + glycine + ATP = glycyl-tRNA(Gly) + AMP + diphosphate. The chain is Glycine--tRNA ligase alpha subunit from Geobacter metallireducens (strain ATCC 53774 / DSM 7210 / GS-15).